A 281-amino-acid chain; its full sequence is L-cysteine S-thiosulfotransferase subunit SoxA (281 aa).

The signal sequence occupies residues 1-25; sequence MTKHGFLLATLVLAGATLPIGPVTA. C99 and C130 are joined by a disulfide. The Cytochrome c domain maps to 175–281; sequence AAYEQGKRFY…LELNGPGARK (107 aa). Residues C195 and H199 each coordinate heme. Substrate is bound at residue R238. C242 contributes to the heme binding site. Residue C242 is the Cysteine persulfide intermediate of the active site.

Belongs to the SoxA family. Heterodimer of SoxA and SoxX. It depends on heme as a cofactor. Post-translationally, cysteine persulfide at Cys-242.

The protein resides in the periplasm. It carries out the reaction L-cysteinyl-[SoxY protein] + thiosulfate + 2 Fe(III)-[cytochrome c] = S-sulfosulfanyl-L-cysteinyl-[SoxY protein] + 2 Fe(II)-[cytochrome c] + 2 H(+). The catalysed reaction is S-sulfanyl-L-cysteinyl-[SoxY protein] + thiosulfate + 2 Fe(III)-[cytochrome c] = S-(2-sulfodisulfanyl)-L-cysteinyl-[SoxY protein] + 2 Fe(II)-[cytochrome c] + 2 H(+). Functionally, C-type monoheme cytochrome, which is part of the SoxAX cytochrome complex involved in sulfur oxidation. The SoxAX complex catalyzes the formation of a heterodisulfide bond between the conserved cysteine residue on a sulfur carrier SoxYZ complex subunit SoxY and thiosulfate or other inorganic sulfur substrates. This leads to the intermediary formation of conspicuous sulfur globules inside of the cells. The polypeptide is L-cysteine S-thiosulfotransferase subunit SoxA (Allochromatium vinosum (Chromatium vinosum)).